Consider the following 635-residue polypeptide: Threonine--tRNA ligase (635 aa).

The TGS domain maps to 1-61 (MINISFPDGS…DNDCRLRILT (61 aa)). A catalytic region spans residues 242 to 533 (DHRKLGKELD…LIEEYAGRFP (292 aa)). Zn(2+)-binding residues include Cys-333, His-384, and His-510.

The protein belongs to the class-II aminoacyl-tRNA synthetase family. Homodimer. Zn(2+) serves as cofactor.

Its subcellular location is the cytoplasm. The catalysed reaction is tRNA(Thr) + L-threonine + ATP = L-threonyl-tRNA(Thr) + AMP + diphosphate + H(+). Its function is as follows. Catalyzes the attachment of threonine to tRNA(Thr) in a two-step reaction: L-threonine is first activated by ATP to form Thr-AMP and then transferred to the acceptor end of tRNA(Thr). Also edits incorrectly charged L-seryl-tRNA(Thr). The chain is Threonine--tRNA ligase from Rickettsia bellii (strain RML369-C).